The sequence spans 139 residues: MSSEKEYVEMLDRLYSKLPEKGRKEGTQSLPNMIILNIGNTTIIRNFAEYCDRIRREDKICMKYLLKELAAPGNVDDKGELVIQGKFSSQVINTLMERFLKAYVECSTCKSLDTILKKEKKSWYIVCLACGAQTPVKPL.

The protein belongs to the eIF-2-beta/eIF-5 family. Heterotrimer composed of an alpha, a beta and a gamma chain.

In terms of biological role, eIF-2 functions in the early steps of protein synthesis by forming a ternary complex with GTP and initiator tRNA. This Saccharolobus solfataricus (strain ATCC 35092 / DSM 1617 / JCM 11322 / P2) (Sulfolobus solfataricus) protein is Translation initiation factor 2 subunit beta.